Consider the following 745-residue polypeptide: Inhibitor of nuclear factor kappa-B kinase subunit alpha (745 aa).

Positions 15-302 constitute a Protein kinase domain; that stretch reads WEMRERLGTG…LTLKQPRCFV (288 aa). ATP contacts are provided by residues 21-29 and lysine 44; that span reads LGTGGFGNV. A Phosphothreonine; by PKB/AKT1 and SGK1 modification is found at threonine 23. Residue aspartate 144 is the Proton acceptor of the active site. Serine 176 is subject to Phosphoserine; by MAP3K14. Threonine 179 bears the (Microbial infection) O-acetylthreonine; by Yersinia YopJ mark. Serine 180 carries the phosphoserine; by SGK1 modification. Residues 455 to 476 are leucine-zipper; sequence LLRYNANLTKMKNTLISASQQL. The tract at residues 738–743 is NEMO-binding; that stretch reads LDWSWL.

This sequence belongs to the protein kinase superfamily. Ser/Thr protein kinase family. I-kappa-B kinase subfamily. In terms of assembly, component of the I-kappa-B-kinase (IKK) core complex consisting of CHUK, IKBKB and IKBKG; probably four alpha/CHUK-beta/IKBKB dimers are associated with four gamma/IKBKG subunits. The IKK core complex seems to associate with regulatory or adapter proteins to form a IKK-signalosome holo-complex. The IKK complex associates with TERF2IP/RAP1, leading to promote IKK-mediated phosphorylation of RELA/p65. Part of a complex composed of NCOA2, NCOA3, CHUK/IKKA, IKBKB, IKBKG and CREBBP. Part of a 70-90 kDa complex at least consisting of CHUK/IKKA, IKBKB, NFKBIA, RELA, ELP1 and MAP3K14. Directly interacts with TRPC4AP. May interact with TRAF2. Interacts with NALP2. May interact with MAVS/IPS1. Interacts with ARRB1 and ARRB2. Interacts with NLRC5; prevents CHUK phosphorylation and kinase activity. Interacts with PIAS1; this interaction induces PIAS1 phosphorylation. Interacts with ZNF268 isoform 2; the interaction is further increased in a TNF-alpha-dependent manner. Interacts with FOXO3. Interacts with IFIT5; the interaction synergizes the recruitment of IKK to MAP3K7 and enhances IKK phosphorylation. Interacts with LRRC14. Interacts with SASH1. Directly interacts with DDX3X after the physiological activation of the TLR7 and TLR8 pathways; this interaction enhances CHUK autophosphorylation. (Microbial infection) Interacts with InlC of Listeria monocytogenes. Phosphorylated by MAP3K14/NIK, AKT and to a lesser extent by MEKK1, and dephosphorylated by PP2A. Autophosphorylated. Post-translationally, ubiquitinated by TRIM56 via 'Lys-63'-linked ubiquitination, promoting activation of CHUK/IKKA. In terms of processing, (Microbial infection) Acetylation of Thr-179 by Yersinia YopJ prevents phosphorylation and activation, thus blocking the I-kappa-B signaling pathway. In terms of tissue distribution, widely expressed.

The protein resides in the cytoplasm. The protein localises to the nucleus. The catalysed reaction is L-seryl-[I-kappa-B protein] + ATP = O-phospho-L-seryl-[I-kappa-B protein] + ADP + H(+). With respect to regulation, activated when phosphorylated and inactivated when dephosphorylated. In terms of biological role, serine kinase that plays an essential role in the NF-kappa-B signaling pathway which is activated by multiple stimuli such as inflammatory cytokines, bacterial or viral products, DNA damages or other cellular stresses. Acts as a part of the canonical IKK complex in the conventional pathway of NF-kappa-B activation and phosphorylates inhibitors of NF-kappa-B on serine residues. These modifications allow polyubiquitination of the inhibitors and subsequent degradation by the proteasome. In turn, free NF-kappa-B is translocated into the nucleus and activates the transcription of hundreds of genes involved in immune response, growth control, or protection against apoptosis. Negatively regulates the pathway by phosphorylating the scaffold protein TAXBP1 and thus promoting the assembly of the A20/TNFAIP3 ubiquitin-editing complex (composed of A20/TNFAIP3, TAX1BP1, and the E3 ligases ITCH and RNF11). Therefore, CHUK plays a key role in the negative feedback of NF-kappa-B canonical signaling to limit inflammatory gene activation. As part of the non-canonical pathway of NF-kappa-B activation, the MAP3K14-activated CHUK/IKKA homodimer phosphorylates NFKB2/p100 associated with RelB, inducing its proteolytic processing to NFKB2/p52 and the formation of NF-kappa-B RelB-p52 complexes. In turn, these complexes regulate genes encoding molecules involved in B-cell survival and lymphoid organogenesis. Also participates in the negative feedback of the non-canonical NF-kappa-B signaling pathway by phosphorylating and destabilizing MAP3K14/NIK. Within the nucleus, phosphorylates CREBBP and consequently increases both its transcriptional and histone acetyltransferase activities. Modulates chromatin accessibility at NF-kappa-B-responsive promoters by phosphorylating histones H3 at 'Ser-10' that are subsequently acetylated at 'Lys-14' by CREBBP. Additionally, phosphorylates the CREBBP-interacting protein NCOA3. Also phosphorylates FOXO3 and may regulate this pro-apoptotic transcription factor. Phosphorylates RIPK1 at 'Ser-25' which represses its kinase activity and consequently prevents TNF-mediated RIPK1-dependent cell death. Phosphorylates AMBRA1 following mitophagy induction, promoting AMBRA1 interaction with ATG8 family proteins and its mitophagic activity. This chain is Inhibitor of nuclear factor kappa-B kinase subunit alpha (CHUK), found in Homo sapiens (Human).